Reading from the N-terminus, the 261-residue chain is Cytochrome c oxidase subunit 3 (261 aa).

Over 1–15 the chain is Mitochondrial matrix; the sequence is MTHQTHSYHMVNPSP. The chain crosses the membrane as a helical span at residues 16-34; that stretch reads WPLTGALSALLMTSGLIMW. The Mitochondrial intermembrane segment spans residues 35-40; the sequence is FHFNSM. The chain crosses the membrane as a helical span at residues 41–66; the sequence is ILLTLGLSTNILTMYQWWRDIIREST. At 67-72 the chain is on the mitochondrial matrix side; sequence FQGHHT. Residues 73–105 traverse the membrane as a helical segment; it reads PTVQKGLRYGMILFIVSEVLFFTGFFWAFYHSS. Topologically, residues 106 to 128 are mitochondrial intermembrane; the sequence is LAPTPELGGCWPPTGIHPLNPLE. Residues 129–152 form a helical membrane-spanning segment; that stretch reads VPLLNTSVLLASGVSITWAHHSLM. Residues 153 to 155 lie on the Mitochondrial matrix side of the membrane; that stretch reads EGN. A helical transmembrane segment spans residues 156 to 183; that stretch reads RKHMLQALFITIALGLYFTLLQASEYYE. The Mitochondrial intermembrane segment spans residues 184–190; the sequence is APFTISD. A helical transmembrane segment spans residues 191–223; that stretch reads GIYGSTFFVATGFHGLHVIIGSTFLIVCFLRQV. The Mitochondrial matrix segment spans residues 224–232; sequence KFHFTSNHH. Residues 233–256 form a helical membrane-spanning segment; the sequence is FGFERAAWYWHFVDVVWLFLYVSI. The Mitochondrial intermembrane segment spans residues 257–261; sequence YWWGS.

This sequence belongs to the cytochrome c oxidase subunit 3 family. Component of the cytochrome c oxidase (complex IV, CIV), a multisubunit enzyme composed of 14 subunits. The complex is composed of a catalytic core of 3 subunits MT-CO1, MT-CO2 and MT-CO3, encoded in the mitochondrial DNA, and 11 supernumerary subunits COX4I, COX5A, COX5B, COX6A, COX6B, COX6C, COX7A, COX7B, COX7C, COX8 and NDUFA4, which are encoded in the nuclear genome. The complex exists as a monomer or a dimer and forms supercomplexes (SCs) in the inner mitochondrial membrane with NADH-ubiquinone oxidoreductase (complex I, CI) and ubiquinol-cytochrome c oxidoreductase (cytochrome b-c1 complex, complex III, CIII), resulting in different assemblies (supercomplex SCI(1)III(2)IV(1) and megacomplex MCI(2)III(2)IV(2)).

It localises to the mitochondrion inner membrane. The catalysed reaction is 4 Fe(II)-[cytochrome c] + O2 + 8 H(+)(in) = 4 Fe(III)-[cytochrome c] + 2 H2O + 4 H(+)(out). Component of the cytochrome c oxidase, the last enzyme in the mitochondrial electron transport chain which drives oxidative phosphorylation. The respiratory chain contains 3 multisubunit complexes succinate dehydrogenase (complex II, CII), ubiquinol-cytochrome c oxidoreductase (cytochrome b-c1 complex, complex III, CIII) and cytochrome c oxidase (complex IV, CIV), that cooperate to transfer electrons derived from NADH and succinate to molecular oxygen, creating an electrochemical gradient over the inner membrane that drives transmembrane transport and the ATP synthase. Cytochrome c oxidase is the component of the respiratory chain that catalyzes the reduction of oxygen to water. Electrons originating from reduced cytochrome c in the intermembrane space (IMS) are transferred via the dinuclear copper A center (CU(A)) of subunit 2 and heme A of subunit 1 to the active site in subunit 1, a binuclear center (BNC) formed by heme A3 and copper B (CU(B)). The BNC reduces molecular oxygen to 2 water molecules using 4 electrons from cytochrome c in the IMS and 4 protons from the mitochondrial matrix. The protein is Cytochrome c oxidase subunit 3 (MT-CO3) of Balaenoptera musculus (Blue whale).